A 145-amino-acid polypeptide reads, in one-letter code: D-aminoacyl-tRNA deacylase (145 aa).

The short motif at 137–138 (GP) is the Gly-cisPro motif, important for rejection of L-amino acids element.

It belongs to the DTD family. As to quaternary structure, homodimer.

It localises to the cytoplasm. It carries out the reaction glycyl-tRNA(Ala) + H2O = tRNA(Ala) + glycine + H(+). It catalyses the reaction a D-aminoacyl-tRNA + H2O = a tRNA + a D-alpha-amino acid + H(+). In terms of biological role, an aminoacyl-tRNA editing enzyme that deacylates mischarged D-aminoacyl-tRNAs. Also deacylates mischarged glycyl-tRNA(Ala), protecting cells against glycine mischarging by AlaRS. Acts via tRNA-based rather than protein-based catalysis; rejects L-amino acids rather than detecting D-amino acids in the active site. By recycling D-aminoacyl-tRNA to D-amino acids and free tRNA molecules, this enzyme counteracts the toxicity associated with the formation of D-aminoacyl-tRNA entities in vivo and helps enforce protein L-homochirality. In Shewanella frigidimarina (strain NCIMB 400), this protein is D-aminoacyl-tRNA deacylase.